Consider the following 321-residue polypeptide: MMIKNKKKLLFLCLLVILIATAYISFVTGTIKLSFNDLFTKFTTGSNEAVDSIIDLRLPRILIALMVGAMLAVSGALLQAALQNPLAEANIIGVSSGALIMRALCMLFIPQLYFYLPLLSFIGGLIPFLIIILLHSKFRFNAVSMILVGVALFVLLNGVLEILTQNPLMKIPQGLTMKIWSDVYILAVSALLGLILTLLLSPKLNLLNLDDIQARSIGFNIDRYRWLTGLLAVFLASATVAIVGQLAFLGIIVHVVRKLVGGNYRVLIPFSTVIGAWLLLVADLLGRVIQPPLEIPANAILMIVGGPMLIYLICQSQRNRI.

Helical transmembrane passes span 9–29 (LLFL…FVTG), 61–81 (ILIA…LQAA), 89–109 (ANII…MLFI), 114–134 (FYLP…IILL), 143–163 (VSMI…LEIL), 179–199 (IWSD…LTLL), 233–253 (VFLA…GIIV), 267–287 (LIPF…LLGR), and 294–314 (EIPA…YLIC).

Belongs to the binding-protein-dependent transport system permease family. FecCD subfamily.

The protein resides in the cell membrane. Part of the binding-protein-dependent transport system for heme-iron. Responsible for the translocation of the substrate across the membrane. This is Probable heme-iron transport system permease protein IsdF (isdF) from Staphylococcus aureus (strain NCTC 8325 / PS 47).